The following is a 330-amino-acid chain: Fructose-1,6-bisphosphatase class 1 (330 aa).

Positions 84, 103, 105, and 106 each coordinate Mg(2+). Residues 106 to 109 (DGSS), Asn-196, and Lys-262 contribute to the substrate site. Glu-268 lines the Mg(2+) pocket.

It belongs to the FBPase class 1 family. As to quaternary structure, homotetramer. It depends on Mg(2+) as a cofactor.

The protein localises to the cytoplasm. The enzyme catalyses beta-D-fructose 1,6-bisphosphate + H2O = beta-D-fructose 6-phosphate + phosphate. It functions in the pathway carbohydrate biosynthesis; gluconeogenesis. This is Fructose-1,6-bisphosphatase class 1 from Shewanella sp. (strain ANA-3).